The following is a 106-amino-acid chain: Nucleoid-associated protein MCCL_1934 (106 aa).

The interval 1-34 is disordered; sequence MRGGGNMQQMMKQMQKMQKKMAEEQEKLKEERIE. Low complexity predominate over residues 7–16; sequence MQQMMKQMQK. Basic and acidic residues predominate over residues 20–34; that stretch reads KMAEEQEKLKEERIE.

This sequence belongs to the YbaB/EbfC family. In terms of assembly, homodimer.

It localises to the cytoplasm. Its subcellular location is the nucleoid. Functionally, binds to DNA and alters its conformation. May be involved in regulation of gene expression, nucleoid organization and DNA protection. This chain is Nucleoid-associated protein MCCL_1934, found in Macrococcus caseolyticus (strain JCSC5402) (Macrococcoides caseolyticum).